Consider the following 428-residue polypeptide: Probable pectin lyase F (428 aa).

Positions 1-20 are cleaved as a signal peptide; it reads MVLLHPLLTAAALLGASARA. Cysteines 83 and 107 form a disulfide. The active site involves R257. The N-linked (GlcNAc...) asparagine glycan is linked to N276. Cysteines 324 and 332 form a disulfide. 2 disordered regions span residues 337–367 and 383–428; these read LTSS…MTTD and GSGG…HHHY. The segment covering 389–417 has biased composition (low complexity); the sequence is AASSSASITPSPTSSAIPSSSATPSSSAY. Positions 418–428 are enriched in basic residues; that stretch reads ARRHYARHHHY.

Belongs to the polysaccharide lyase 1 family.

It localises to the secreted. The enzyme catalyses Eliminative cleavage of (1-&gt;4)-alpha-D-galacturonan methyl ester to give oligosaccharides with 4-deoxy-6-O-methyl-alpha-D-galact-4-enuronosyl groups at their non-reducing ends.. Its function is as follows. Pectinolytic enzymes consist of four classes of enzymes: pectin lyase, polygalacturonase, pectin methylesterase and rhamnogalacturonase. Among pectinolytic enzymes, pectin lyase is the most important in depolymerization of pectin, since it cleaves internal glycosidic bonds of highly methylated pectins. This Aspergillus flavus (strain ATCC 200026 / FGSC A1120 / IAM 13836 / NRRL 3357 / JCM 12722 / SRRC 167) protein is Probable pectin lyase F (pelF).